A 114-amino-acid chain; its full sequence is Large ribosomal subunit protein uL22 (114 aa).

This sequence belongs to the universal ribosomal protein uL22 family. In terms of assembly, part of the 50S ribosomal subunit.

Its function is as follows. This protein binds specifically to 23S rRNA; its binding is stimulated by other ribosomal proteins, e.g. L4, L17, and L20. It is important during the early stages of 50S assembly. It makes multiple contacts with different domains of the 23S rRNA in the assembled 50S subunit and ribosome. Functionally, the globular domain of the protein is located near the polypeptide exit tunnel on the outside of the subunit, while an extended beta-hairpin is found that lines the wall of the exit tunnel in the center of the 70S ribosome. The chain is Large ribosomal subunit protein uL22 from Aeromonas salmonicida (strain A449).